Reading from the N-terminus, the 330-residue chain is Peroxidase 55 (330 aa).

Positions 1 to 30 (MDIRSDDAKKPMMMWFLGMLLFSMVAESNA) are cleaved as a signal peptide. Intrachain disulfides connect cysteine 41-cysteine 121, cysteine 74-cysteine 79, cysteine 127-cysteine 326, and cysteine 206-cysteine 238. Histidine 72 (proton acceptor) is an active-site residue. Ca(2+) contacts are provided by aspartate 73, valine 76, glycine 78, aspartate 80, and serine 82. Proline 169 serves as a coordination point for substrate. Histidine 199 contacts heme b. Threonine 200 contributes to the Ca(2+) binding site. Asparagine 215 carries N-linked (GlcNAc...) asparagine glycosylation. The Ca(2+) site is built by aspartate 250, serine 253, and aspartate 258.

The protein belongs to the peroxidase family. Classical plant (class III) peroxidase subfamily. Heme b is required as a cofactor. It depends on Ca(2+) as a cofactor. In terms of tissue distribution, slightly expressed in roots.

The protein resides in the secreted. The enzyme catalyses 2 a phenolic donor + H2O2 = 2 a phenolic radical donor + 2 H2O. Functionally, removal of H(2)O(2), oxidation of toxic reductants, biosynthesis and degradation of lignin, suberization, auxin catabolism, response to environmental stresses such as wounding, pathogen attack and oxidative stress. These functions might be dependent on each isozyme/isoform in each plant tissue. The chain is Peroxidase 55 (PER55) from Arabidopsis thaliana (Mouse-ear cress).